A 540-amino-acid chain; its full sequence is Glucose-6-phosphate isomerase (540 aa).

Catalysis depends on Glu-350, which acts as the Proton donor. Catalysis depends on residues His-381 and Lys-503.

The protein belongs to the GPI family.

It is found in the cytoplasm. It catalyses the reaction alpha-D-glucose 6-phosphate = beta-D-fructose 6-phosphate. It participates in carbohydrate biosynthesis; gluconeogenesis. The protein operates within carbohydrate degradation; glycolysis; D-glyceraldehyde 3-phosphate and glycerone phosphate from D-glucose: step 2/4. In terms of biological role, catalyzes the reversible isomerization of glucose-6-phosphate to fructose-6-phosphate. This Burkholderia pseudomallei (strain 668) protein is Glucose-6-phosphate isomerase.